The chain runs to 142 residues: Peptide methionine sulfoxide reductase MsrB (142 aa).

A MsrB domain is found at 13–135 (EKDWKVELSE…NSLSMTFKGE (123 aa)). 4 residues coordinate Zn(2+): Cys-52, Cys-55, Cys-101, and Cys-104. The active-site Nucleophile is the Cys-124.

This sequence belongs to the MsrB Met sulfoxide reductase family. The cofactor is Zn(2+).

The catalysed reaction is L-methionyl-[protein] + [thioredoxin]-disulfide + H2O = L-methionyl-(R)-S-oxide-[protein] + [thioredoxin]-dithiol. The polypeptide is Peptide methionine sulfoxide reductase MsrB (Alteromonas mediterranea (strain DSM 17117 / CIP 110805 / LMG 28347 / Deep ecotype)).